A 456-amino-acid polypeptide reads, in one-letter code: MTHLIETFTSVLHQSALKPSRLIVAFSGGVDSRVLLELAAQYAQTHGIECCAVHVHHGLSKNADLWAEQCQTWCDALSVSLAVERVSLDINCGESVEKLARDARYQAFQQHIRQGDVLVTGQHIDDQLETFLLALKRGSGPKGLSSMAKVMSFGEAFIVRPLLSVTRLDIEASAHDMGLTWVEDESNQDLRFDRNFIRHQVTPTLTERWPSFRESVCRSAQLCAEQESLLDELLESHLQQALGGCNSKSNSKSNSKSQSLSIDSLSQHSDLLRARLIRMWLSHCNQPMPSQKQLKLIWDEVACAQADANPKLVLNDVEIRRFNNQLYLVQDTKDLSSWKSEILIDENLLLPDGLGEIHLKAVSSGSASHNRDVQRFSLTKANGTLRVIFNPEGVSAHPVGRGHSRKLKKLFQEYQVPSWLRRRTPILMDGDRVIAVLGLFVDKNYEGQDCEALWSK.

27–32 (SGGVDS) lines the ATP pocket.

The protein belongs to the tRNA(Ile)-lysidine synthase family.

It is found in the cytoplasm. It carries out the reaction cytidine(34) in tRNA(Ile2) + L-lysine + ATP = lysidine(34) in tRNA(Ile2) + AMP + diphosphate + H(+). Its function is as follows. Ligates lysine onto the cytidine present at position 34 of the AUA codon-specific tRNA(Ile) that contains the anticodon CAU, in an ATP-dependent manner. Cytidine is converted to lysidine, thus changing the amino acid specificity of the tRNA from methionine to isoleucine. The polypeptide is tRNA(Ile)-lysidine synthase (Vibrio atlanticus (strain LGP32) (Vibrio splendidus (strain Mel32))).